The chain runs to 510 residues: Probable cytosol aminopeptidase (510 aa).

Positions 282 and 287 each coordinate Mn(2+). Lysine 294 is a catalytic residue. Aspartate 305, aspartate 364, and glutamate 366 together coordinate Mn(2+). Residue arginine 368 is part of the active site.

The protein belongs to the peptidase M17 family. Mn(2+) serves as cofactor.

The protein resides in the cytoplasm. The enzyme catalyses Release of an N-terminal amino acid, Xaa-|-Yaa-, in which Xaa is preferably Leu, but may be other amino acids including Pro although not Arg or Lys, and Yaa may be Pro. Amino acid amides and methyl esters are also readily hydrolyzed, but rates on arylamides are exceedingly low.. The catalysed reaction is Release of an N-terminal amino acid, preferentially leucine, but not glutamic or aspartic acids.. Presumably involved in the processing and regular turnover of intracellular proteins. Catalyzes the removal of unsubstituted N-terminal amino acids from various peptides. This chain is Probable cytosol aminopeptidase, found in Cupriavidus pinatubonensis (strain JMP 134 / LMG 1197) (Cupriavidus necator (strain JMP 134)).